Reading from the N-terminus, the 240-residue chain is Eukaryotic translation initiation factor 3 subunit K (240 aa).

A PCI domain is found at 41–221; the sequence is YDKDIVLTIL…TIKTRNIDEK (181 aa).

It belongs to the eIF-3 subunit K family. As to quaternary structure, component of the eukaryotic translation initiation factor 3 (eIF-3) complex.

The protein localises to the cytoplasm. Component of the eukaryotic translation initiation factor 3 (eIF-3) complex, which is involved in protein synthesis of a specialized repertoire of mRNAs and, together with other initiation factors, stimulates binding of mRNA and methionyl-tRNAi to the 40S ribosome. The eIF-3 complex specifically targets and initiates translation of a subset of mRNAs involved in cell proliferation. In Caenorhabditis elegans, this protein is Eukaryotic translation initiation factor 3 subunit K.